The primary structure comprises 324 residues: Putative HTH-type transcriptional regulatory protein UNCMA_15260 (324 aa).

Positions 132–189 constitute an HTH cro/C1-type domain; sequence LRSLREAKNISLGELAMALGVSRRTISKYESGMNATIEAALKLEEILDAPIACPVNMI. Residues 143–162 constitute a DNA-binding region (H-T-H motif); that stretch reads LGELAMALGVSRRTISKYES.

The chain is Putative HTH-type transcriptional regulatory protein UNCMA_15260 from Methanocella arvoryzae (strain DSM 22066 / NBRC 105507 / MRE50).